The chain runs to 908 residues: AdoMet-dependent rRNA methyltransferase SPB1 (908 aa).

Glycine 57, tryptophan 59, aspartate 77, aspartate 93, and aspartate 118 together coordinate S-adenosyl-L-methionine. Lysine 158 acts as the Proton acceptor in catalysis. A coiled-coil region spans residues 378–422; that stretch reads MDEEEQITEELQKLQQAKLAKTKRERKRANEKKARELLKLQLNMT. 3 disordered regions span residues 440–513, 535–715, and 806–841; these read IFDL…YDSY, NFDA…DEVK, and AKGRKKMKAVARMEKAKKKADGVMESEEMGDGEKAR. Positions 464 to 493 are enriched in acidic residues; the sequence is DDGEGMDLASESEEEEDEDEEDDEVLDSDE. The segment covering 535–545 has biased composition (basic and acidic residues); the sequence is NFDAWHGIQEK. Composition is skewed to acidic residues over residues 546–564 and 579–591; these read SDEEGSDDDDGQDDDEEGG and DSSDSDSDAEPET. Over residues 592–610 the composition is skewed to basic and acidic residues; that stretch reads EVPKKIKKVSFEKPARSEK. Acidic residues-rich tracts occupy residues 650–678 and 685–712; these read DGDDEEEEEEDESEEEESDDEDVDMEDAS and EGDDDFEIVPQAPEDDGPEWDVDDEDQD. The segment covering 816 to 827 has biased composition (basic and acidic residues); that stretch reads ARMEKAKKKADG.

This sequence belongs to the class I-like SAM-binding methyltransferase superfamily. RNA methyltransferase RlmE family. SPB1 subfamily. As to quaternary structure, component of the nucleolar and nucleoplasmic pre-60S ribosomal particle.

It localises to the nucleus. The protein localises to the nucleolus. The enzyme catalyses a ribonucleotide in rRNA + S-adenosyl-L-methionine = a 2'-O-methylribonucleotide in rRNA + S-adenosyl-L-homocysteine + H(+). In terms of biological role, required for proper assembly of pre-ribosomal particles during the biogenesis of the 60S ribosomal subunit. This Cryptococcus neoformans var. neoformans serotype D (strain B-3501A) (Filobasidiella neoformans) protein is AdoMet-dependent rRNA methyltransferase SPB1.